We begin with the raw amino-acid sequence, 312 residues long: DNA-directed RNA polymerase subunit alpha (312 aa).

The segment at 1–229 (MLQYQIDRIE…ELFQPLATVT (229 aa)) is alpha N-terminal domain (alpha-NTD). The segment at 245–312 (QIPLEELNLS…ISIPQSRTSA (68 aa)) is alpha C-terminal domain (alpha-CTD).

The protein belongs to the RNA polymerase alpha chain family. As to quaternary structure, in cyanobacteria the RNAP catalytic core is composed of 2 alpha, 1 beta, 1 beta', 1 gamma and 1 omega subunit. When a sigma factor is associated with the core the holoenzyme is formed, which can initiate transcription.

The enzyme catalyses RNA(n) + a ribonucleoside 5'-triphosphate = RNA(n+1) + diphosphate. DNA-dependent RNA polymerase catalyzes the transcription of DNA into RNA using the four ribonucleoside triphosphates as substrates. This Prochlorococcus marinus (strain MIT 9313) protein is DNA-directed RNA polymerase subunit alpha.